Here is a 130-residue protein sequence, read N- to C-terminus: Small ribosomal subunit protein uS9 (130 aa).

The protein belongs to the universal ribosomal protein uS9 family.

The sequence is that of Small ribosomal subunit protein uS9 from Agathobacter rectalis (strain ATCC 33656 / DSM 3377 / JCM 17463 / KCTC 5835 / VPI 0990) (Eubacterium rectale).